A 572-amino-acid chain; its full sequence is Proline--tRNA ligase (572 aa).

This sequence belongs to the class-II aminoacyl-tRNA synthetase family. ProS type 1 subfamily. As to quaternary structure, homodimer.

The protein resides in the cytoplasm. The catalysed reaction is tRNA(Pro) + L-proline + ATP = L-prolyl-tRNA(Pro) + AMP + diphosphate. In terms of biological role, catalyzes the attachment of proline to tRNA(Pro) in a two-step reaction: proline is first activated by ATP to form Pro-AMP and then transferred to the acceptor end of tRNA(Pro). As ProRS can inadvertently accommodate and process non-cognate amino acids such as alanine and cysteine, to avoid such errors it has two additional distinct editing activities against alanine. One activity is designated as 'pretransfer' editing and involves the tRNA(Pro)-independent hydrolysis of activated Ala-AMP. The other activity is designated 'posttransfer' editing and involves deacylation of mischarged Ala-tRNA(Pro). The misacylated Cys-tRNA(Pro) is not edited by ProRS. This is Proline--tRNA ligase from Yersinia pestis (strain Pestoides F).